A 153-amino-acid polypeptide reads, in one-letter code: MPLLLTGRTFRRDLEAHGCLAVHAPLEGGAETRLLRRLRGAGYRTRLWSARGLGDPEVFLTQKHGIRPPHLGHQSVGRGAAVGEVQEVVPQLGDLLDGDAQVALWLLEGQVLSQSELRSLCDLCSREPRLRIIVEMGGARSLRWQPMSGLLAS.

Belongs to the complex I NdhN subunit family. As to quaternary structure, NDH-1 can be composed of about 15 different subunits; different subcomplexes with different compositions have been identified which probably have different functions.

Its subcellular location is the cellular thylakoid membrane. The enzyme catalyses a plastoquinone + NADH + (n+1) H(+)(in) = a plastoquinol + NAD(+) + n H(+)(out). It catalyses the reaction a plastoquinone + NADPH + (n+1) H(+)(in) = a plastoquinol + NADP(+) + n H(+)(out). NDH-1 shuttles electrons from an unknown electron donor, via FMN and iron-sulfur (Fe-S) centers, to quinones in the respiratory and/or the photosynthetic chain. The immediate electron acceptor for the enzyme in this species is believed to be plastoquinone. Couples the redox reaction to proton translocation, and thus conserves the redox energy in a proton gradient. Cyanobacterial NDH-1 also plays a role in inorganic carbon-concentration. The sequence is that of NAD(P)H-quinone oxidoreductase subunit N from Parasynechococcus marenigrum (strain WH8102).